The chain runs to 283 residues: NAD kinase (283 aa).

Residue Asp-65 is the Proton acceptor of the active site. Residues 65–66 (DG), 139–140 (ND), Arg-150, Arg-167, Asp-169, 180–185 (TGYSVS), and Gln-239 contribute to the NAD(+) site.

This sequence belongs to the NAD kinase family. A divalent metal cation serves as cofactor.

The protein localises to the cytoplasm. The enzyme catalyses NAD(+) + ATP = ADP + NADP(+) + H(+). In terms of biological role, involved in the regulation of the intracellular balance of NAD and NADP, and is a key enzyme in the biosynthesis of NADP. Catalyzes specifically the phosphorylation on 2'-hydroxyl of the adenosine moiety of NAD to yield NADP. The polypeptide is NAD kinase (Nitratidesulfovibrio vulgaris (strain DSM 19637 / Miyazaki F) (Desulfovibrio vulgaris)).